Consider the following 236-residue polypeptide: Ubiquinone biosynthesis O-methyltransferase (236 aa).

S-adenosyl-L-methionine-binding residues include Arg40, Gly59, Asp80, and Leu124.

The protein belongs to the methyltransferase superfamily. UbiG/COQ3 family.

It catalyses the reaction a 3-demethylubiquinol + S-adenosyl-L-methionine = a ubiquinol + S-adenosyl-L-homocysteine + H(+). The enzyme catalyses a 3-(all-trans-polyprenyl)benzene-1,2-diol + S-adenosyl-L-methionine = a 2-methoxy-6-(all-trans-polyprenyl)phenol + S-adenosyl-L-homocysteine + H(+). Its pathway is cofactor biosynthesis; ubiquinone biosynthesis. In terms of biological role, O-methyltransferase that catalyzes the 2 O-methylation steps in the ubiquinone biosynthetic pathway. This is Ubiquinone biosynthesis O-methyltransferase from Saccharophagus degradans (strain 2-40 / ATCC 43961 / DSM 17024).